The primary structure comprises 85 residues: MAHKKAGGSTRNGRDSESKRLGVKRFGGESVLAGNIIVRQRGTKFHAGTNVGIGKDHTLFALSEGKVKFEVKGPKNRKFVSIEAE.

The interval 1–22 (MAHKKAGGSTRNGRDSESKRLG) is disordered.

The protein belongs to the bacterial ribosomal protein bL27 family.

This is Large ribosomal subunit protein bL27 from Aliivibrio fischeri (strain ATCC 700601 / ES114) (Vibrio fischeri).